The primary structure comprises 101 residues: MIEKIVKESEKGILIDIEVTTNAKKNEIGKINEWRKRIEIRIKEQPIEGKANKAIMKFLKGIFKSEILINSGTTSAQKTVLIPDKTKDDIVKILKKEIKSI.

This sequence belongs to the UPF0235 family.

This is UPF0235 protein MmarC5_0538 from Methanococcus maripaludis (strain C5 / ATCC BAA-1333).